A 145-amino-acid chain; its full sequence is MTQAILETEKGTIRLQFFDNDAPNTVANFVKLSQDGFYDGLTFHRVIPGFMSQGGCPHGTGTGGPGYKIPCEINDNPHLAGTLSMAHAGRNTGGSQFFICHEPQPHLDGVHTTFGQTEDDESLKVVRSLRNGDRILSVKIVTDAA.

The 145-residue stretch at 1-145 (MTQAILETEK…LSVKIVTDAA (145 aa)) folds into the PPIase cyclophilin-type domain.

It belongs to the cyclophilin-type PPIase family.

The enzyme catalyses [protein]-peptidylproline (omega=180) = [protein]-peptidylproline (omega=0). In terms of biological role, PPIases accelerate the folding of proteins. It catalyzes the cis-trans isomerization of proline imidic peptide bonds in oligopeptides. This is Peptidyl-prolyl cis-trans isomerase (rot) from Synechococcus elongatus (strain ATCC 33912 / PCC 7942 / FACHB-805) (Anacystis nidulans R2).